Reading from the N-terminus, the 158-residue chain is Methylglyoxal synthase (158 aa).

Positions 1–158 constitute an MGS-like domain; that stretch reads MRRKLRIALV…AFEESLKVKE (158 aa). Residues H12, K16, 38–41, and 63–64 contribute to the substrate site; these read TGTT and SG. Catalysis depends on D69, which acts as the Proton donor/acceptor. H96 lines the substrate pocket.

This sequence belongs to the methylglyoxal synthase family.

It catalyses the reaction dihydroxyacetone phosphate = methylglyoxal + phosphate. Its function is as follows. Catalyzes the formation of methylglyoxal from dihydroxyacetone phosphate. This Treponema socranskii protein is Methylglyoxal synthase.